Here is a 239-residue protein sequence, read N- to C-terminus: Splicing factor U2AF 35 kDa subunit (239 aa).

The residue at position 2 (alanine 2) is an N-acetylalanine. The C3H1-type 1 zinc finger occupies 12 to 40; that stretch reads EKDKVNCSFYFKIGACRHGDRCSRLHNKP. Lysine 39 is modified (N6-methyllysine). Serine 61 and serine 145 each carry phosphoserine. Residues 65 to 147 enclose the RRM domain; it reads LRCAVSDVEM…QPIHAELSPV (83 aa). The C3H1-type 2 zinc-finger motif lies at 149 to 176; sequence DFREACCRQYEMGECTRGGFCNFMHLKP. Arginine 165 bears the Omega-N-methylarginine mark. The disordered stretch occupies residues 183–239; it reads RELYGRRRKKHRSRSRSRERRSRSRDRGRGGGGGGGGGGGRERDRRRSRDRERSGRF. Positions 188 to 208 are enriched in basic residues; sequence RRRKKHRSRSRSRERRSRSRD. Over residues 212-221 the composition is skewed to gly residues; the sequence is GGGGGGGGGG. Basic and acidic residues predominate over residues 222–239; the sequence is GRERDRRRSRDRERSGRF.

This sequence belongs to the splicing factor SR family. Identified in the spliceosome C complex. Heterodimer with U2AF2. Interacts (via RS domain) with PHF5A (via N-terminus). Interacts with ZRANB2. Interacts with SDE2. Interacts with SF3B1. Expressed in primary spermatocytes and elongating spermatids (at protein level).

The protein resides in the nucleus. It localises to the nucleus speckle. Functionally, plays a critical role in both constitutive and enhancer-dependent splicing by mediating protein-protein interactions and protein-RNA interactions required for accurate 3'-splice site selection. Recruits U2 snRNP to the branch point. Directly mediates interactions between U2AF2 and proteins bound to the enhancers and thus may function as a bridge between U2AF2 and the enhancer complex to recruit it to the adjacent intron. The chain is Splicing factor U2AF 35 kDa subunit (U2af1) from Mus musculus (Mouse).